The sequence spans 665 residues: MAFPVDLLDNCTHEELENSSEDYLSSLRCGDPEHPECFSSLNITIPVSLSNVGFVPLYGGNQTQKILALFAPEDSLTAVALYLVGQWWAIDDIVKTSEPSREGLKQVSTLGERVVLYVLNRIIYRKQEMERNEIPFLCHSSTDYAKILWKKGEAVGFYSVKPTGSLCASFLTQNYQLPVLDTMFIRKKYRGKDLGLHMLEDFVDSFTEDALGLRYPLSSLMYTASKQYFEKYPGDHELLWEVEGVGHWHQRVPVTRALQREAIKATDVSQYEATRPVSGEYGLAAVPEHEPGLDDTQSSELQIHSLKDAFASTSEGPEKTPVSTRTRSSHLKRPKIGKHFQDSEFSSSQGEDENVAKTSPTASVNKIEYAARTSESSEEFLEEEPEQGVIDFEDESGDKDAQPALETQPRLQKQDGDKDSALEPVNGEVMDAALKPSLTTEDEDSTSEGLEEDLKVPPFNSSGEPGNPVPLVAESSKVPEATLAKTSPDTDSEMLIDQSPSDDKGHTEENLSPVSKKKTLLGSSDNVATVSNIEKSDGNFPNSVVPEFPEEPVSQNLSPNTTSSVEDQGEEGAPEAQEPSATQSSLIEVELEDAPFPQNAGQKSQSEEQSEASSEHLEQFTQSAEKAVDSSSEEIEVEVPVVDRRNLRRKAKGHKGPGKKKAKLT.

Residues 309–665 form a disordered region; sequence AFASTSEGPE…GPGKKKAKLT (357 aa). The segment covering 311 to 326 has biased composition (polar residues); sequence ASTSEGPEKTPVSTRT. Residues 327–338 show a composition bias toward basic residues; that stretch reads RSSHLKRPKIGK. Phosphoserine is present on residues Ser348 and Ser377. The segment covering 376–397 has biased composition (acidic residues); sequence SSEEFLEEEPEQGVIDFEDESG. Residues 412–421 show a composition bias toward basic and acidic residues; sequence QKQDGDKDSA. Residues 440–451 are compositionally biased toward acidic residues; that stretch reads TEDEDSTSEGLE. Phosphoserine occurs at positions 447 and 512. Polar residues-rich tracts occupy residues 521-533 and 553-566; these read LGSS…VSNI and VSQN…SSVE. Phosphoserine is present on residues Ser610, Ser613, and Ser630. A compositionally biased stretch (basic residues) spans 646–665; the sequence is NLRRKAKGHKGPGKKKAKLT.

It belongs to the FAM169 family.

The protein resides in the nucleus envelope. Its subcellular location is the nucleus inner membrane. The protein is Soluble lamin-associated protein of 75 kDa (Fam169a) of Mus musculus (Mouse).